Consider the following 1409-residue polypeptide: DNA-directed RNA polymerase subunit beta' (1409 aa).

Positions 70, 72, 85, and 88 each coordinate Zn(2+). 3 residues coordinate Mg(2+): D458, D460, and D462. Positions 813, 887, 894, and 897 each coordinate Zn(2+). The span at 1385-1403 (EAAELAGSTSDVSTTADAS) shows a compositional bias: low complexity. A disordered region spans residues 1385–1409 (EAAELAGSTSDVSTTADASEGAASE).

It belongs to the RNA polymerase beta' chain family. In terms of assembly, the RNAP catalytic core consists of 2 alpha, 1 beta, 1 beta' and 1 omega subunit. When a sigma factor is associated with the core the holoenzyme is formed, which can initiate transcription. Requires Mg(2+) as cofactor. The cofactor is Zn(2+).

The enzyme catalyses RNA(n) + a ribonucleoside 5'-triphosphate = RNA(n+1) + diphosphate. Its function is as follows. DNA-dependent RNA polymerase catalyzes the transcription of DNA into RNA using the four ribonucleoside triphosphates as substrates. The polypeptide is DNA-directed RNA polymerase subunit beta' (Variovorax paradoxus (strain S110)).